The sequence spans 898 residues: Cilium assembly protein DZIP1 (898 aa).

Residues 14-66 (DPPGTHSSAGIPSLLSSPQSQPSSGSQSRPAPSTMSGPLTSSGASTSIPPPFK) form a disordered region. Over residues 25 to 46 (PSLLSSPQSQPSSGSQSRPAPS) the composition is skewed to low complexity. A compositionally biased stretch (polar residues) spans 47–60 (TMSGPLTSSGASTS). Positions 145–197 (LSISLQAAEERLLAEAREREQICVQLQKKTQDAKALKEELKQRKKIIASQQAM) form a coiled coil. The C2H2-type zinc-finger motif lies at 207–230 (HKCQHCEKAFMNASFLQSHMQRRH). Coiled coils occupy residues 242–353 (NQKK…VQTQ) and 407–447 (SAVS…ISSK). A compositionally biased stretch (polar residues) spans 435-463 (TSQNKQMKQISSKPPTITVQREGVSTPSP). Disordered regions lie at residues 435–509 (TSQN…SWQK), 585–739 (EQRV…WTDG), and 773–878 (KSLE…DAGT). Positions 495-505 (SSISESPTENR) are enriched in low complexity. Residues 573–590 (YRRALKEISHKLEQRVKE) are a coiled coil. Positions 605–652 (VVQSRPRSSSFPSTVTRVMSGPASKQQRTPQPVPRSRTNVPHKTSTPL) are enriched in polar residues. Over residues 662–684 (SDEDSSEEEEEEEEEEESSDEES) the composition is skewed to acidic residues. Polar residues-rich tracts occupy residues 685–715 (PQMQKKTVLVNSSTAKAQNTAKTQSTAQSVR) and 723–734 (AEPTNVTTLSDS). Positions 797-815 (KPTDVRNTRQNAKKELKYS) are enriched in basic and acidic residues. Over residues 816 to 826 (DDDDDDDDDWD) the composition is skewed to acidic residues. Polar residues predominate over residues 855–866 (DTSTSVWGSSTG).

This sequence belongs to the DZIP C2H2-type zinc-finger protein family. Expressed throughout the embryo starting at 12 hours.

It localises to the cell projection. Its subcellular location is the cilium. The protein localises to the cytoplasm. It is found in the cytoskeleton. The protein resides in the cilium basal body. It localises to the microtubule organizing center. Its subcellular location is the centrosome. The protein localises to the centriole. It is found in the nucleus. Functionally, molecular adapter that recruits protein complexes required for cilium assembly and function to the cilium basal body. Required for establishment of left-right asymmetry during embryogenesis. Acts as a permissive factor that is required for the proper regulation of Hedgehog (Hh) target genes in response to Hh signals. Acts downstream of the Smoothened protein to modulate Gli activity in the somites of the developing embryo. The protein is Cilium assembly protein DZIP1 (dzip1) of Danio rerio (Zebrafish).